A 142-amino-acid polypeptide reads, in one-letter code: Peptide methionine sulfoxide reductase MsrB (142 aa).

One can recognise a MsrB domain in the interval 2-125 (IKKNKNDLNE…NSAAVQFIPY (124 aa)). Cys-114 serves as the catalytic Nucleophile.

It belongs to the MsrB Met sulfoxide reductase family.

The enzyme catalyses L-methionyl-[protein] + [thioredoxin]-disulfide + H2O = L-methionyl-(R)-S-oxide-[protein] + [thioredoxin]-dithiol. The protein is Peptide methionine sulfoxide reductase MsrB of Staphylococcus saprophyticus subsp. saprophyticus (strain ATCC 15305 / DSM 20229 / NCIMB 8711 / NCTC 7292 / S-41).